Here is a 443-residue protein sequence, read N- to C-terminus: EGF-containing fibulin-like extracellular matrix protein 2 (443 aa).

The N-terminal stretch at 1–27 (MLPFASCLPGSLLLWAFLLLLLGAASP) is a signal peptide. At glutamine 28 the chain carries Pyrrolidone carboxylic acid. Positions 36-81 (YTECTDGYEWDADSQHCRDVNECLTIPEACKGEMKCINHYGGYLCL) constitute an EGF-like 1; atypical domain. 18 disulfides stabilise this stretch: cysteine 58–cysteine 121, cysteine 65–cysteine 80, cysteine 71–cysteine 109, cysteine 127–cysteine 140, cysteine 134–cysteine 149, cysteine 151–cysteine 162, cysteine 168–cysteine 177, cysteine 173–cysteine 186, cysteine 188–cysteine 201, cysteine 207–cysteine 217, cysteine 213–cysteine 226, cysteine 228–cysteine 241, cysteine 247–cysteine 258, cysteine 254–cysteine 267, cysteine 269–cysteine 281, cysteine 287–cysteine 300, cysteine 294–cysteine 309, and cysteine 315–cysteine 327. The segment at 91-117 (LHGEGPPPPAAHAQQPNPCPQGYEPDE) is disordered. One can recognise an EGF-like 2; calcium-binding domain in the interval 123 to 163 (DVDECTQALHDCRPSQDCHNLPGSYQCTCPDGYRKIGPECV). The EGF-like 3; calcium-binding domain occupies 164–202 (DIDECRYRYCQHRCVNLPGSFRCQCEPGFQLGPNNRSCV). An N-linked (GlcNAc...) asparagine glycan is attached at asparagine 198. An EGF-like 4; calcium-binding domain is found at 203–242 (DVNECDMGAPCEQRCFNSYGTFLCRCNQGYELHRDGFSCS). An EGF-like 5; calcium-binding domain is found at 243-282 (DIDECGYSSYLCQYRCVNEPGRFSCHCPQGYQLLATRLCQ). The EGF-like 6; calcium-binding domain maps to 283–328 (DIDECETGAHQCSEAQTCVNFHGGYRCVDTNRCVEPYVQVSDNRCL). The N-linked (GlcNAc...) asparagine glycan is linked to asparagine 394.

It belongs to the fibulin family. As to quaternary structure, homodimer; disulfide-linked. Multimer; allows heparin binding. Monomer. Binds preferentially to p53 mutants. Interacts with FBN1 (via N-terminal domain); this interaction inhibits EFEMP2 binding to LOX and ELN. Interacts with ELN with moderate affinity; this interaction regulates ELN self-assembly maturation stage. Interacts with PCOLCE. Interacts with collagen type IV trimer (COL4A1-COL4A1-COL4A2), NID2 and moderately with COL15A1-derived endostatin. Interacts with EMILIN1; this interaction promotes the incorporation of EFEMP2 into the extracellular matrix. Interacts with LTBP4; the LTBP4 long form (LTBP4L) has a stronger binding affinity than the LTBP4 short form and the LTBP4 long form promotes fibrillar deposition of EFEMP2. Interacts with LOX (via propeptide); this interaction is strong and facilitates formation of ternary complexes with ELN during elastic fiber assembly; this interaction limits interaction of EFEMP2 with FBLN5. Interacts with PITX2. Interacts with FBLN5 with moderate affinity. Interacts with LOXL1 (via propeptide), LTBP1 and TGFB1 stronger than with LOXL2 and LTBP3. In terms of processing, N-glycosylated; contains mostly complex-type glycans. Not O-glycosylated. Post-translationally, cleaved by ELANE; produces a 50-55 kDa fragment. Cleaved by MMP2 and MMP9; produces several fragments. Expressed in elastic fibers of the skin, near the dermal-epidermal junction, surrounding the hair follicles and throughout the dermis. Expressed in tendon around tenocytes. Prominently expressed in cartilage, bone, perichondrium and ligaments. Also detected in bone marrow stroma. Expressed in aorta, lung, and esophagus.

The protein localises to the secreted. The protein resides in the extracellular space. It is found in the extracellular matrix. Its subcellular location is the basement membrane. In terms of biological role, plays a crucial role in elastic fiber formation in tissue, and in the formation of ultrastructural connections between elastic laminae and smooth muscle cells in the aorta, therefore participates in terminal differentiation and maturation of smooth muscle cell (SMC) and in the mechanical properties and wall integrity maintenance of the aorta. In addition, is involved in the control of collagen fibril assembly in tissue throught proteolytic activation of LOX leading to cross- linking of collagen and elastin. Also promotes ELN coacervation and participates in the deposition of ELN coacervates on to microfibrils but also regulates ELN cross- linking through LOX interaction. Moreover adheres to the cells through heparin binding in a calcium-dependent manner and regulates vascularlar smooth muscle cells proliferation through angiotensin signaling. The polypeptide is EGF-containing fibulin-like extracellular matrix protein 2 (Mus musculus (Mouse)).